A 612-amino-acid polypeptide reads, in one-letter code: Threonine--tRNA ligase (612 aa).

The interval Asp218–Pro509 is catalytic. Zn(2+) is bound by residues Cys310, His361, and His486.

The protein belongs to the class-II aminoacyl-tRNA synthetase family. In terms of assembly, homodimer. Zn(2+) is required as a cofactor.

Its subcellular location is the cytoplasm. The enzyme catalyses tRNA(Thr) + L-threonine + ATP = L-threonyl-tRNA(Thr) + AMP + diphosphate + H(+). In terms of biological role, catalyzes the attachment of threonine to tRNA(Thr) in a two-step reaction: L-threonine is first activated by ATP to form Thr-AMP and then transferred to the acceptor end of tRNA(Thr). Also edits incorrectly charged L-seryl-tRNA(Thr). The sequence is that of Threonine--tRNA ligase from Helicobacter pylori (strain J99 / ATCC 700824) (Campylobacter pylori J99).